A 910-amino-acid chain; its full sequence is Protein translocase subunit SecA (910 aa).

Residues Q89, 107-111 (GEGKT), and D496 each bind ATP. Positions 873–910 (QEFSGGNLNRSQSNGSSVTVTTSSGGGTERKTSRRRKR) are disordered. Polar residues predominate over residues 876 to 886 (SGGNLNRSQSN).

This sequence belongs to the SecA family. Monomer and homodimer. Part of the essential Sec protein translocation apparatus which comprises SecA, SecYEG and auxiliary proteins SecDF. Other proteins may also be involved.

The protein resides in the cell inner membrane. It is found in the cytoplasm. It carries out the reaction ATP + H2O + cellular proteinSide 1 = ADP + phosphate + cellular proteinSide 2.. In terms of biological role, part of the Sec protein translocase complex. Interacts with the SecYEG preprotein conducting channel. Has a central role in coupling the hydrolysis of ATP to the transfer of proteins into and across the cell membrane, serving as an ATP-driven molecular motor driving the stepwise translocation of polypeptide chains across the membrane. The polypeptide is Protein translocase subunit SecA (Leptospira interrogans serogroup Icterohaemorrhagiae serovar copenhageni (strain Fiocruz L1-130)).